The chain runs to 403 residues: Serine/threonine transporter SstT (403 aa).

A run of 9 helical transmembrane segments spans residues 14 to 34, 44 to 64, 79 to 99, 138 to 158, 175 to 195, 214 to 234, 295 to 315, 327 to 347, and 353 to 373; these read VTQIVIGLLAGIALALLAPAI, VFVSALKAVAPVLVFILVMAS, ILWLYLLGTFAAAVVAVVASM, ALLNANFIGVLTWAIGLGVAL, GVTLIVRVVIRFAPLGIFGLV, LAVLIGCMLFVALVMNPLIVF, MAGAAITITVLTLAAVHTLGI, VVAAVCACGASGVAGGSLLLI, and LFGIPSEIAMQVVAVGFIIGV.

The protein belongs to the dicarboxylate/amino acid:cation symporter (DAACS) (TC 2.A.23) family.

It is found in the cell inner membrane. The catalysed reaction is L-serine(in) + Na(+)(in) = L-serine(out) + Na(+)(out). It catalyses the reaction L-threonine(in) + Na(+)(in) = L-threonine(out) + Na(+)(out). Involved in the import of serine and threonine into the cell, with the concomitant import of sodium (symport system). The protein is Serine/threonine transporter SstT of Pseudomonas putida (strain ATCC 700007 / DSM 6899 / JCM 31910 / BCRC 17059 / LMG 24140 / F1).